A 267-amino-acid polypeptide reads, in one-letter code: tRNA pseudouridine synthase A (267 aa).

Asp53 (nucleophile) is an active-site residue. Position 114 (Tyr114) interacts with substrate.

It belongs to the tRNA pseudouridine synthase TruA family. In terms of assembly, homodimer.

It carries out the reaction uridine(38/39/40) in tRNA = pseudouridine(38/39/40) in tRNA. In terms of biological role, formation of pseudouridine at positions 38, 39 and 40 in the anticodon stem and loop of transfer RNAs. This chain is tRNA pseudouridine synthase A, found in Chlamydia trachomatis serovar L2b (strain UCH-1/proctitis).